Reading from the N-terminus, the 409-residue chain is Nucleoprotein (409 aa).

Disordered stretches follow at residues 1 to 32 (MASG…SSGN), 46 to 84 (SPQP…KGRR), 121 to 194 (ADVK…GSED), and 238 to 259 (VDQV…DKMN). Positions 29 to 160 (SSGNASWFQA…GNFRWDFIPL (132 aa)) are RNA-binding. The 126-residue stretch at 31–156 (GNASWFQAIK…GGPDGNFRWD (126 aa)) folds into the CoV N NTD domain. Basic residues predominate over residues 70–84 (YWRRQARFKPGKGRR). A compositionally biased stretch (low complexity) spans 162–179 (RGRSGRSTAASSAASSRP). Composition is skewed to basic and acidic residues over residues 180–192 (PSRE…RSGS) and 247–259 (KGKE…DKMN). Phosphoserine; by host is present on residues Ser-190 and Ser-192. In terms of domain architecture, CoV N CTD spans 215 to 331 (TKAKADEMAH…QCVDGVGTRP (117 aa)). Residues 226-333 (RYCKRTIPPG…VDGVGTRPKD (108 aa)) form a dimerization region. A disulfide bond links Cys-320 and Cys-323. A disordered region spans residues 326 to 409 (GVGTRPKDDE…GDSALGENEL (84 aa)). Residues 341–356 (RSSSRPATRTSSPAPR) are compositionally biased toward low complexity. Positions 358 to 367 (QRLKKEKRPK) are enriched in basic residues. A compositionally biased stretch (basic and acidic residues) spans 368–384 (KQDDEVDKALTSDEERN). Thr-378 is modified (phosphothreonine; by host). Ser-379 is modified (phosphoserine; by host).

This sequence belongs to the gammacoronavirus nucleocapsid protein family. Homooligomer. Both monomeric and oligomeric forms interact with RNA. Interacts with protein M. Interacts with NSP3; this interaction serves to tether the genome to the newly translated replicase-transcriptase complex at a very early stage of infection. ADP-ribosylated. The ADP-ribosylation is retained in the virion during infection. In terms of processing, phosphorylated on serine and threonine residues.

Its subcellular location is the virion. The protein localises to the host endoplasmic reticulum-Golgi intermediate compartment. It is found in the host Golgi apparatus. Its function is as follows. Packages the positive strand viral genome RNA into a helical ribonucleocapsid (RNP) and plays a fundamental role during virion assembly through its interactions with the viral genome and membrane protein M. Plays an important role in enhancing the efficiency of subgenomic viral RNA transcription as well as viral replication. This is Nucleoprotein from Avian infectious bronchitis virus (strain Gray) (IBV).